We begin with the raw amino-acid sequence, 145 residues long: MKKSARRQSRELATQGLYQWLLSNASSGEIDAQLRGALGYDKADKELLEAILHGVIREHATLVEAITPSLDRPIDQLSPVERAVLLIATFELTHHVETPYRVIINEAVELTKTFGGSDGYKYVNGVLDKLAAKLRPAETQARRNS.

This sequence belongs to the NusB family.

Functionally, involved in transcription antitermination. Required for transcription of ribosomal RNA (rRNA) genes. Binds specifically to the boxA antiterminator sequence of the ribosomal RNA (rrn) operons. The chain is Transcription antitermination protein NusB from Burkholderia vietnamiensis (strain G4 / LMG 22486) (Burkholderia cepacia (strain R1808)).